The following is a 417-amino-acid chain: UDP-N-acetylmuramoylalanine--D-glutamate ligase (417 aa).

104 to 110 (GSNGKST) contributes to the ATP binding site.

Belongs to the MurCDEF family.

The protein localises to the cytoplasm. It catalyses the reaction UDP-N-acetyl-alpha-D-muramoyl-L-alanine + D-glutamate + ATP = UDP-N-acetyl-alpha-D-muramoyl-L-alanyl-D-glutamate + ADP + phosphate + H(+). It functions in the pathway cell wall biogenesis; peptidoglycan biosynthesis. In terms of biological role, cell wall formation. Catalyzes the addition of glutamate to the nucleotide precursor UDP-N-acetylmuramoyl-L-alanine (UMA). In Francisella tularensis subsp. novicida (strain U112), this protein is UDP-N-acetylmuramoylalanine--D-glutamate ligase.